Reading from the N-terminus, the 155-residue chain is Microsomal glutathione S-transferase 1 (155 aa).

The Lumenal segment spans residues 3-9; that stretch reads DLTQVMD. A helical membrane pass occupies residues 10–33; the sequence is DEVFMAFASYATIILSKMMLMSTA. Residues 34–62 are Cytoplasmic-facing; that stretch reads TAFYRLTRKVFANPEDCVAFGKGENAKKY. Arg38 provides a ligand contact to glutathione. An N6-acetyllysine mark is found at Lys42, Lys55, and Lys60. Residues 63–96 traverse the membrane as a helical segment; it reads LRTDDRVERVRRAHLNDLENIIPFLGIGLLYSLS. Arg73, Arg74, His76, and Glu81 together coordinate glutathione. The Lumenal portion of the chain corresponds to 97–99; the sequence is GPD. The helical transmembrane segment at 100–123 threads the bilayer; it reads PSTAILHFRLFVGARIYHTIAYLT. A glutathione-binding site is contributed by Tyr121. The Cytoplasmic portion of the chain corresponds to 124-128; that stretch reads PLPQP. A helical transmembrane segment spans residues 129–148; that stretch reads NRALSFFVGYGVTLSMAYRL. Over 149-155 the chain is Lumenal; that stretch reads LKSKLYL.

It belongs to the MAPEG family. As to quaternary structure, homotrimer; The trimer binds only one molecule of glutathione. In terms of tissue distribution, highly expressed in liver.

It localises to the endoplasmic reticulum membrane. The protein resides in the mitochondrion outer membrane. It carries out the reaction RX + glutathione = an S-substituted glutathione + a halide anion + H(+). Its function is as follows. Conjugation of reduced glutathione to a wide number of exogenous and endogenous hydrophobic electrophiles. In Homo sapiens (Human), this protein is Microsomal glutathione S-transferase 1 (MGST1).